Here is an 84-residue protein sequence, read N- to C-terminus: Large ribosomal subunit protein uL23 (84 aa).

Belongs to the universal ribosomal protein uL23 family. In terms of assembly, part of the 50S ribosomal subunit. Contacts protein L29.

Binds to 23S rRNA. One of the proteins that surrounds the polypeptide exit tunnel on the outside of the ribosome. In Thermoplasma acidophilum (strain ATCC 25905 / DSM 1728 / JCM 9062 / NBRC 15155 / AMRC-C165), this protein is Large ribosomal subunit protein uL23.